Here is a 323-residue protein sequence, read N- to C-terminus: Lipoyl synthase (323 aa).

7 residues coordinate [4Fe-4S] cluster: Cys61, Cys66, Cys72, Cys87, Cys91, Cys94, and Ser300. Residues 73–289 form the Radical SAM core domain; that stretch reads WDKKHATFMI…ETVAYTKGFL (217 aa).

Belongs to the radical SAM superfamily. Lipoyl synthase family. It depends on [4Fe-4S] cluster as a cofactor.

It is found in the cytoplasm. The enzyme catalyses [[Fe-S] cluster scaffold protein carrying a second [4Fe-4S](2+) cluster] + N(6)-octanoyl-L-lysyl-[protein] + 2 oxidized [2Fe-2S]-[ferredoxin] + 2 S-adenosyl-L-methionine + 4 H(+) = [[Fe-S] cluster scaffold protein] + N(6)-[(R)-dihydrolipoyl]-L-lysyl-[protein] + 4 Fe(3+) + 2 hydrogen sulfide + 2 5'-deoxyadenosine + 2 L-methionine + 2 reduced [2Fe-2S]-[ferredoxin]. The protein operates within protein modification; protein lipoylation via endogenous pathway; protein N(6)-(lipoyl)lysine from octanoyl-[acyl-carrier-protein]: step 2/2. Its function is as follows. Catalyzes the radical-mediated insertion of two sulfur atoms into the C-6 and C-8 positions of the octanoyl moiety bound to the lipoyl domains of lipoate-dependent enzymes, thereby converting the octanoylated domains into lipoylated derivatives. This Sinorhizobium medicae (strain WSM419) (Ensifer medicae) protein is Lipoyl synthase.